Reading from the N-terminus, the 252-residue chain is Segregation and condensation protein A (252 aa).

Residues 117 to 136 (EREEERQNAFTKPPSDLSEF) form a disordered region.

It belongs to the ScpA family. As to quaternary structure, component of a cohesin-like complex composed of ScpA, ScpB and the Smc homodimer, in which ScpA and ScpB bind to the head domain of Smc. The presence of the three proteins is required for the association of the complex with DNA.

The protein resides in the cytoplasm. Functionally, participates in chromosomal partition during cell division. May act via the formation of a condensin-like complex containing Smc and ScpB that pull DNA away from mid-cell into both cell halves. This is Segregation and condensation protein A from Bacillus pumilus (strain SAFR-032).